Reading from the N-terminus, the 165-residue chain is Shikimate kinase (165 aa).

11-16 (GAGKTT) lines the ATP pocket. Threonine 15 lines the Mg(2+) pocket. Residues aspartate 33, arginine 57, and glycine 78 each coordinate substrate. Arginine 116 contributes to the ATP binding site. Arginine 134 is a substrate binding site.

This sequence belongs to the shikimate kinase family. In terms of assembly, monomer. The cofactor is Mg(2+).

The protein resides in the cytoplasm. It catalyses the reaction shikimate + ATP = 3-phosphoshikimate + ADP + H(+). Its pathway is metabolic intermediate biosynthesis; chorismate biosynthesis; chorismate from D-erythrose 4-phosphate and phosphoenolpyruvate: step 5/7. Its function is as follows. Catalyzes the specific phosphorylation of the 3-hydroxyl group of shikimic acid using ATP as a cosubstrate. This Bacillus cereus (strain G9842) protein is Shikimate kinase.